We begin with the raw amino-acid sequence, 152 residues long: Large ribosomal subunit protein uL22 (152 aa).

The protein belongs to the universal ribosomal protein uL22 family. Part of the 50S ribosomal subunit.

Functionally, this protein binds specifically to 23S rRNA. It makes multiple contacts with different domains of the 23S rRNA in the assembled 50S subunit and ribosome. The globular domain of the protein is located near the polypeptide exit tunnel on the outside of the subunit, while an extended beta-hairpin is found that lines the wall of the exit tunnel in the center of the 70S ribosome. The chain is Large ribosomal subunit protein uL22 from Cenarchaeum symbiosum (strain A).